The primary structure comprises 614 residues: ATP-dependent zinc metalloprotease FtsH (614 aa).

Topologically, residues 1-7 (MKKQWKK) are stromal. The helical transmembrane segment at 8–28 (IVLFVLPVIITLITLSSFLFY) threads the bilayer. Residues 29–116 (NQDVVHNWSS…AHPSSSNVNL (88 aa)) lie on the Lumenal side of the membrane. The helical transmembrane segment at 117–137 (VSWLSNLLLPLILIITLFFFF) threads the bilayer. The Stromal portion of the chain corresponds to 138–614 (RRGNKSSSGP…EFMRIVEERV (477 aa)). 211-218 (GPPGTGKT) serves as a coordination point for ATP. His-432 is a Zn(2+) binding site. Glu-433 is a catalytic residue. Zn(2+) is bound by residues His-436 and Asp-510.

The protein in the central section; belongs to the AAA ATPase family. In the C-terminal section; belongs to the peptidase M41 family. As to quaternary structure, homohexamer. It depends on Zn(2+) as a cofactor.

The protein localises to the plastid. It is found in the chloroplast thylakoid membrane. In terms of biological role, acts as a processive, ATP-dependent zinc metallopeptidase. The sequence is that of ATP-dependent zinc metalloprotease FtsH from Cyanidium caldarium (Red alga).